The sequence spans 203 residues: MAKNIAKALLDIEAVSLSPNDLFTWSSGIKSPIYCDNRITLGYPEVRNAIRDGLIQLIKEHFSNVEIISGTATAGIPHAAYISEKMELPMNYVRSKSKSHGKQNQIEGAKSENKNVVVVEDLISTGGSSITAVEALEEAGANVLGVVAIFTYGLAKADETFNKAHIPFYTLSDYNELIEVAKDDGKISLNDIQTLVDWRDNLS.

5-phospho-alpha-D-ribose 1-diphosphate-binding positions include R94, K98, H100, and 120–128; that span reads EDLISTGGS. S124 contributes to the orotate binding site.

Belongs to the purine/pyrimidine phosphoribosyltransferase family. PyrE subfamily. As to quaternary structure, homodimer. Requires Mg(2+) as cofactor.

It catalyses the reaction orotidine 5'-phosphate + diphosphate = orotate + 5-phospho-alpha-D-ribose 1-diphosphate. It participates in pyrimidine metabolism; UMP biosynthesis via de novo pathway; UMP from orotate: step 1/2. In terms of biological role, catalyzes the transfer of a ribosyl phosphate group from 5-phosphoribose 1-diphosphate to orotate, leading to the formation of orotidine monophosphate (OMP). The chain is Orotate phosphoribosyltransferase from Staphylococcus epidermidis (strain ATCC 35984 / DSM 28319 / BCRC 17069 / CCUG 31568 / BM 3577 / RP62A).